Consider the following 264-residue polypeptide: Thiazole synthase (264 aa).

Lys-106 serves as the catalytic Schiff-base intermediate with DXP. 1-deoxy-D-xylulose 5-phosphate contacts are provided by residues Gly-167, Ala-193–Gly-194, and Asn-215–Thr-216.

Belongs to the ThiG family. Homotetramer. Forms heterodimers with either ThiH or ThiS.

It localises to the cytoplasm. It carries out the reaction [ThiS sulfur-carrier protein]-C-terminal-Gly-aminoethanethioate + 2-iminoacetate + 1-deoxy-D-xylulose 5-phosphate = [ThiS sulfur-carrier protein]-C-terminal Gly-Gly + 2-[(2R,5Z)-2-carboxy-4-methylthiazol-5(2H)-ylidene]ethyl phosphate + 2 H2O + H(+). The protein operates within cofactor biosynthesis; thiamine diphosphate biosynthesis. Functionally, catalyzes the rearrangement of 1-deoxy-D-xylulose 5-phosphate (DXP) to produce the thiazole phosphate moiety of thiamine. Sulfur is provided by the thiocarboxylate moiety of the carrier protein ThiS. In vitro, sulfur can be provided by H(2)S. This chain is Thiazole synthase, found in Xanthomonas euvesicatoria pv. vesicatoria (strain 85-10) (Xanthomonas campestris pv. vesicatoria).